Consider the following 464-residue polypeptide: tRNA modification GTPase MnmE (464 aa).

(6S)-5-formyl-5,6,7,8-tetrahydrofolate contacts are provided by Arg-27, Glu-90, and Lys-129. A TrmE-type G domain is found at 222–384 (GVTLVLAGSV…LYDKIKTLIS (163 aa)). GTP is bound by residues 232–237 (NAGKSS), 251–257 (SSYPGTT), and 276–279 (DTAG). The Mg(2+) site is built by Ser-236 and Thr-257. Position 464 (Lys-464) interacts with (6S)-5-formyl-5,6,7,8-tetrahydrofolate.

It belongs to the TRAFAC class TrmE-Era-EngA-EngB-Septin-like GTPase superfamily. TrmE GTPase family. In terms of assembly, homodimer. Heterotetramer of two MnmE and two MnmG subunits. The cofactor is K(+).

Its subcellular location is the cytoplasm. Its function is as follows. Exhibits a very high intrinsic GTPase hydrolysis rate. Involved in the addition of a carboxymethylaminomethyl (cmnm) group at the wobble position (U34) of certain tRNAs, forming tRNA-cmnm(5)s(2)U34. In Borrelia garinii subsp. bavariensis (strain ATCC BAA-2496 / DSM 23469 / PBi) (Borreliella bavariensis), this protein is tRNA modification GTPase MnmE.